The chain runs to 660 residues: 1-deoxy-D-xylulose-5-phosphate synthase (660 aa).

Thiamine diphosphate contacts are provided by residues histidine 86 and 127 to 129 (AHS). Aspartate 164 lines the Mg(2+) pocket. Residues 165 to 166 (GS), asparagine 196, tyrosine 306, and glutamate 388 contribute to the thiamine diphosphate site. Asparagine 196 is a Mg(2+) binding site.

This sequence belongs to the transketolase family. DXPS subfamily. Homodimer. The cofactor is Mg(2+). Thiamine diphosphate is required as a cofactor.

It catalyses the reaction D-glyceraldehyde 3-phosphate + pyruvate + H(+) = 1-deoxy-D-xylulose 5-phosphate + CO2. Its pathway is metabolic intermediate biosynthesis; 1-deoxy-D-xylulose 5-phosphate biosynthesis; 1-deoxy-D-xylulose 5-phosphate from D-glyceraldehyde 3-phosphate and pyruvate: step 1/1. Functionally, catalyzes the acyloin condensation reaction between C atoms 2 and 3 of pyruvate and glyceraldehyde 3-phosphate to yield 1-deoxy-D-xylulose-5-phosphate (DXP). The protein is 1-deoxy-D-xylulose-5-phosphate synthase of Gluconobacter oxydans (strain 621H) (Gluconobacter suboxydans).